The primary structure comprises 377 residues: Methylthioribose-1-phosphate isomerase (377 aa).

Catalysis depends on D254, which acts as the Proton donor.

This sequence belongs to the eIF-2B alpha/beta/delta subunits family. MtnA subfamily.

It is found in the cytoplasm. It localises to the nucleus. The catalysed reaction is 5-(methylsulfanyl)-alpha-D-ribose 1-phosphate = 5-(methylsulfanyl)-D-ribulose 1-phosphate. Its pathway is amino-acid biosynthesis; L-methionine biosynthesis via salvage pathway; L-methionine from S-methyl-5-thio-alpha-D-ribose 1-phosphate: step 1/6. In terms of biological role, catalyzes the interconversion of methylthioribose-1-phosphate (MTR-1-P) into methylthioribulose-1-phosphate (MTRu-1-P). This is Methylthioribose-1-phosphate isomerase (mri1) from Aspergillus terreus (strain NIH 2624 / FGSC A1156).